The chain runs to 252 residues: Triosephosphate isomerase (252 aa).

A substrate-binding site is contributed by 9-11 (NWK). His96 serves as the catalytic Electrophile. The active-site Proton acceptor is the Glu168. Residues Gly174, Ser214, and 235 to 236 (GG) contribute to the substrate site.

Belongs to the triosephosphate isomerase family. In terms of assembly, homodimer.

Its subcellular location is the cytoplasm. It catalyses the reaction D-glyceraldehyde 3-phosphate = dihydroxyacetone phosphate. The protein operates within carbohydrate biosynthesis; gluconeogenesis. It participates in carbohydrate degradation; glycolysis; D-glyceraldehyde 3-phosphate from glycerone phosphate: step 1/1. Its function is as follows. Involved in the gluconeogenesis. Catalyzes stereospecifically the conversion of dihydroxyacetone phosphate (DHAP) to D-glyceraldehyde-3-phosphate (G3P). The protein is Triosephosphate isomerase of Chloroherpeton thalassium (strain ATCC 35110 / GB-78).